Consider the following 365-residue polypeptide: HVDHGKTTLTAAITTVLAKKYGGSARAFDQIDNAPEEKARGITINTSHVEYDTSMRHYAHVDCPGHADYIKNMITGAAQMDGAILVVAATDGPMPQTREHILLGRQVGVPYIVVFLNKCDMVDDEELLELVEMEVRDLLTQYDFPGEKTPIIRGSALKALEGDAVWEEKIVDLANTLDSYIPTPERSIDQPFLLPIEDVFSISGRGTVVTGRVERGVIKVGEEVEIVGIKVTSKTICTGVEMFRKLLDEGRAGENVGVLLRGTKRDDIERGQVLAKPGTITPHIKFESEVYVLSKEEGGRHTPFFKGYRPQFYFRTTDVTGYVELPEGVEMVMPGDNIKMVVTLIHPIAMSDGLRFAIREGGRTV.

GTP is bound by residues 1–7 (HVDHGKT), 62–66 (DCPGH), and 117–120 (NKCD). The tr-type G domain occupies 1-185 (HVDHGKTTLT…TLDSYIPTPE (185 aa)). Position 7 (threonine 7) interacts with Mg(2+).

The protein belongs to the TRAFAC class translation factor GTPase superfamily. Classic translation factor GTPase family. EF-Tu/EF-1A subfamily. Monomer.

It is found in the cytoplasm. It carries out the reaction GTP + H2O = GDP + phosphate + H(+). In terms of biological role, GTP hydrolase that promotes the GTP-dependent binding of aminoacyl-tRNA to the A-site of ribosomes during protein biosynthesis. This chain is Elongation factor Tu, found in Buchnera aphidicola subsp. Schlechtendalia chinensis.